The primary structure comprises 215 residues: MVLLTMIARLADGLPLAASMQEDEQMGRDLQQYQSQAKQLFRKLNEQSPNRCTLEAGSMSFHYVIEKGVCYLVLCEAGFPKKLAFAYLEDLQAEFHEQHGKKVPTVSRPYSFIEFDTYIQKTKKSYIDSRARRNLSNINTELQDVQRIMVANIEEVLQRGEALSALDSKASNLSSLSKKYRSDAKYLNTRSTYAKLAAGGVFFIMLIVYIRFWWL.

Topologically, residues 1 to 190 (MVLLTMIARL…RSDAKYLNTR (190 aa)) are cytoplasmic. In terms of domain architecture, Longin spans 6 to 119 (MIARLADGLP…YSFIEFDTYI (114 aa)). Residues 134–194 (NLSNINTELQ…KYLNTRSTYA (61 aa)) form the v-SNARE coiled-coil homology domain. Residues 191-213 (STYAKLAAGGVFFIMLIVYIRFW) traverse the membrane as a helical segment. Over 214 to 215 (WL) the chain is Lumenal.

This sequence belongs to the synaptobrevin family. Component of 2 distinct SNARE complexes.

Its subcellular location is the endoplasmic reticulum membrane. The protein resides in the endoplasmic reticulum-Golgi intermediate compartment membrane. The protein localises to the golgi apparatus. It is found in the cis-Golgi network membrane. It localises to the trans-Golgi network membrane. Its subcellular location is the melanosome. Its function is as follows. SNARE involved in targeting and fusion of ER-derived transport vesicles with the Golgi complex as well as Golgi-derived retrograde transport vesicles with the ER. The chain is Vesicle-trafficking protein SEC22b-B from Danio rerio (Zebrafish).